The sequence spans 444 residues: N-succinylarginine dihydrolase (444 aa).

Substrate is bound by residues 19 to 28 (SGLSVGNIAS), N110, and 137 to 138 (HR). E174 is a catalytic residue. R214 provides a ligand contact to substrate. Residue H250 is part of the active site. Residues D252 and N362 each coordinate substrate. The active-site Nucleophile is the C368.

It belongs to the succinylarginine dihydrolase family. As to quaternary structure, homodimer.

It carries out the reaction N(2)-succinyl-L-arginine + 2 H2O + 2 H(+) = N(2)-succinyl-L-ornithine + 2 NH4(+) + CO2. The protein operates within amino-acid degradation; L-arginine degradation via AST pathway; L-glutamate and succinate from L-arginine: step 2/5. Catalyzes the hydrolysis of N(2)-succinylarginine into N(2)-succinylornithine, ammonia and CO(2). In Aliivibrio fischeri (strain MJ11) (Vibrio fischeri), this protein is N-succinylarginine dihydrolase.